The following is a 615-amino-acid chain: Elongation factor 4 (615 aa).

The tr-type G domain occupies 14 to 200 (SRIRNFCIIA…KVVELIPAPS (187 aa)). GTP-binding positions include 26–31 (DHGKST) and 147–150 (NKID).

It belongs to the TRAFAC class translation factor GTPase superfamily. Classic translation factor GTPase family. LepA subfamily.

It is found in the cell membrane. The enzyme catalyses GTP + H2O = GDP + phosphate + H(+). Required for accurate and efficient protein synthesis under certain stress conditions. May act as a fidelity factor of the translation reaction, by catalyzing a one-codon backward translocation of tRNAs on improperly translocated ribosomes. Back-translocation proceeds from a post-translocation (POST) complex to a pre-translocation (PRE) complex, thus giving elongation factor G a second chance to translocate the tRNAs correctly. Binds to ribosomes in a GTP-dependent manner. The sequence is that of Elongation factor 4 from Corynebacterium efficiens (strain DSM 44549 / YS-314 / AJ 12310 / JCM 11189 / NBRC 100395).